The following is a 130-amino-acid chain: Small ribosomal subunit protein uS9 (130 aa).

This sequence belongs to the universal ribosomal protein uS9 family.

The sequence is that of Small ribosomal subunit protein uS9 from Variovorax paradoxus (strain S110).